The primary structure comprises 529 residues: Bifunctional purine biosynthesis protein PurH (529 aa).

The region spanning Met1 to Val148 is the MGS-like domain.

It belongs to the PurH family.

The enzyme catalyses (6R)-10-formyltetrahydrofolate + 5-amino-1-(5-phospho-beta-D-ribosyl)imidazole-4-carboxamide = 5-formamido-1-(5-phospho-D-ribosyl)imidazole-4-carboxamide + (6S)-5,6,7,8-tetrahydrofolate. It catalyses the reaction IMP + H2O = 5-formamido-1-(5-phospho-D-ribosyl)imidazole-4-carboxamide. It participates in purine metabolism; IMP biosynthesis via de novo pathway; 5-formamido-1-(5-phospho-D-ribosyl)imidazole-4-carboxamide from 5-amino-1-(5-phospho-D-ribosyl)imidazole-4-carboxamide (10-formyl THF route): step 1/1. The protein operates within purine metabolism; IMP biosynthesis via de novo pathway; IMP from 5-formamido-1-(5-phospho-D-ribosyl)imidazole-4-carboxamide: step 1/1. This is Bifunctional purine biosynthesis protein PurH from Citrobacter koseri (strain ATCC BAA-895 / CDC 4225-83 / SGSC4696).